The following is a 66-amino-acid chain: ATP synthase subunit c (66 aa).

2 helical membrane passes run 3–23 and 45–65; these read LTFF…GMLM and IMGI…SFVI.

This sequence belongs to the ATPase C chain family. As to quaternary structure, F-type ATPases have 2 components, F(1) - the catalytic core - and F(0) - the membrane proton channel. F(1) has five subunits: alpha(3), beta(3), gamma(1), delta(1), epsilon(1). F(0) has three main subunits: a(1), b(2) and c(10-14). The alpha and beta chains form an alternating ring which encloses part of the gamma chain. F(1) is attached to F(0) by a central stalk formed by the gamma and epsilon chains, while a peripheral stalk is formed by the delta and b chains.

It is found in the cell membrane. In terms of biological role, f(1)F(0) ATP synthase produces ATP from ADP in the presence of a proton or sodium gradient. F-type ATPases consist of two structural domains, F(1) containing the extramembraneous catalytic core and F(0) containing the membrane proton channel, linked together by a central stalk and a peripheral stalk. During catalysis, ATP synthesis in the catalytic domain of F(1) is coupled via a rotary mechanism of the central stalk subunits to proton translocation. Its function is as follows. Key component of the F(0) channel; it plays a direct role in translocation across the membrane. A homomeric c-ring of between 10-14 subunits forms the central stalk rotor element with the F(1) delta and epsilon subunits. The protein is ATP synthase subunit c (atpE) of Streptococcus oralis.